The chain runs to 628 residues: MDLWQLLLTLAVVGSSNAFVGREAVTVTLNRANLSLQRVNASLETNSSGNPKFTKCRSPELETFSCHWTDEGHHGLKSTGFIQMFYTKRNSQEQNQEWKECPDYVSAGENSCYFNSSYTSIWKPYCVKLTSNGGKVDEKCFYVEEIVQPDPPTGLNWTLMNTSATAIYGDIQVRWKPPRSADVKKGWIMLDYELQIKQTNETQWKMMDPVTSTSVPLYSLRLDKEYEVRIRSRLQNSDKYGEFSEILYITLPQSSPFTCEEEFQFPWFLIMIFGIFGLTVMLLVVMFSKQQRIKMLILPPVPVPKIKGVDPDLLKEGKLEEVNTILAIHDNSKPQFYNDDSWVEFIELDIDDSDEKIEGSDTDRLLSSDHQKSLNILGAKDGDSGRTSCYEPDILEADFNANDGTSEDVQPDKLKEEADLLCLDEKNQNNSPCDAPPDPQQALVIPPEEEKPQPLLIGKTESTNQDAPNQISNPISLANMDFYAQVSDITPAGSVVLSPGQKNKAGLSQCEAHPEANFVKDNACFFKGDAKNPDVMTPHIEVKSHEEPSFKQEDPYITTESLTTAAEKSGPPEQSPSSEMALPDYTSIHIVQSPQGLILNAAALPLPDKEFLSSCGYVSTDQLNKIML.

The first 18 residues, 1–18 (MDLWQLLLTLAVVGSSNA), serve as a signal peptide directing secretion. Topologically, residues 19-266 (FVGREAVTVT…FTCEEEFQFP (248 aa)) are extracellular. N-linked (GlcNAc...) asparagine glycosylation is found at N33, N40, and N46. 2 cysteine pairs are disulfide-bonded: C56/C66 and C101/C112. Residue N115 is glycosylated (N-linked (GlcNAc...) asparagine). A disulfide bridge connects residues C126 and C140. A Fibronectin type-III domain is found at 151 to 254 (PPTGLNWTLM…EILYITLPQS (104 aa)). Residues N156, N161, and N200 are each glycosylated (N-linked (GlcNAc...) asparagine). The WSXWS motif signature appears at 240-244 (YGEFS). Residues 267–287 (WFLIMIFGIFGLTVMLLVVMF) traverse the membrane as a helical segment. Residues 288–628 (SKQQRIKMLI…STDQLNKIML (341 aa)) are Cytoplasmic-facing. The segment at 294–379 (KMLILPPVPV…HQKSLNILGA (86 aa)) is required for JAK2 binding. Positions 297–305 (ILPPVPVPK) match the Box 1 motif motif. A UbE motif motif is present at residues 340-349 (DSWVEFIELD). The residue at position 341 (S341) is a Phosphoserine. Phosphotyrosine is present on residues Y483 and Y585.

Belongs to the type I cytokine receptor family. Type 1 subfamily. In terms of assembly, on growth hormone (GH) binding, forms homodimers and binds JAK2 via a box 1-containing domain. The soluble form (GHBP) is produced by phorbol ester-promoted proteolytic cleavage at the cell surface (shedding) by ADAM17/TACE. Shedding is inhibited by growth hormone (GH) binding to the receptor probably due to a conformational change in GHR rendering the receptor inaccessible to ADAM17. In terms of processing, on GH binding, phosphorylated on tyrosine residues in the cytoplasmic domain by JAK2. Post-translationally, ubiquitinated by the ECS(SOCS2) complex following ligand-binding and phosphorylation by JAK2, leading to its degradation by the proteasome. Regulation by the ECS(SOCS2) complex acts as a negative feedback loop of growth hormone receptor signaling. Ubiquitination is not sufficient for GHR internalization.

The protein localises to the cell membrane. Its subcellular location is the secreted. In terms of biological role, receptor for pituitary gland growth hormone (GH1) involved in regulating postnatal body growth. On ligand binding, couples to the JAK2/STAT5 pathway. Functionally, the soluble form (GHBP) acts as a reservoir of growth hormone in plasma and may be a modulator/inhibitor of GH signaling. In Cavia porcellus (Guinea pig), this protein is Growth hormone receptor (GHR).